Reading from the N-terminus, the 265-residue chain is MNKDVSLGQPIVRYEDGKLFNTTDQYVTEFPLTIMVNGEEFATVICSPTNLEELVIGFLASEGAILKRDELKSVLIDDSKGFAHVELNKDLGDRFQYSTKRMIASCCGKSREFYFQNDAAIAKTSMSKITLTPMQIINMMTRLQSASHIYQETGGLHNAAISDGLTFFVHRQDIGRHNALDKLYGFCIQRHITVRDKVLIFSGRISSEILIKAAKIGVGVILSKSAPTTLAVTLANDLNITAVGFIRNGGFNIYSHPERIIDSEQ.

Cys107 functions as the Cysteine persulfide intermediate in the catalytic mechanism.

This sequence belongs to the FdhD family.

Its subcellular location is the cytoplasm. Its function is as follows. Required for formate dehydrogenase (FDH) activity. Acts as a sulfur carrier protein that transfers sulfur from IscS to the molybdenum cofactor prior to its insertion into FDH. This chain is Sulfur carrier protein FdhD, found in Staphylococcus aureus (strain NCTC 8325 / PS 47).